We begin with the raw amino-acid sequence, 254 residues long: D-aminoacyl-tRNA deacylase (254 aa).

The interval 61–83 is disordered; it reads KPTLTVHTPGNLTEDNSHGGNPE. Residues 65-74 are compositionally biased toward polar residues; the sequence is TVHTPGNLTE.

It belongs to the DtdA deacylase family. In terms of assembly, monomer. Zn(2+) is required as a cofactor.

It carries out the reaction a D-aminoacyl-tRNA + H2O = a tRNA + a D-alpha-amino acid + H(+). It catalyses the reaction glycyl-tRNA(Ala) + H2O = tRNA(Ala) + glycine + H(+). D-aminoacyl-tRNA deacylase with broad substrate specificity. By recycling D-aminoacyl-tRNA to D-amino acids and free tRNA molecules, this enzyme counteracts the toxicity associated with the formation of D-aminoacyl-tRNA entities in vivo. The chain is D-aminoacyl-tRNA deacylase from Methanococcus maripaludis (strain C7 / ATCC BAA-1331).